The following is a 164-amino-acid chain: Anterior gradient protein 2-B (164 aa).

The signal sequence occupies residues 1–20 (MESVLKSLFVLLVATSFTLA). 2 consecutive short sequence motifs (homodimer stabilization; interchain) follow at residues 34–43 (SRGWGDNLEW) and 49–56 (EGLYKAKA).

The protein belongs to the AGR family. In terms of assembly, monomer and homodimer.

The protein resides in the secreted. Its subcellular location is the endoplasmic reticulum. In Xenopus laevis (African clawed frog), this protein is Anterior gradient protein 2-B (agr2-b).